Here is a 235-residue protein sequence, read N- to C-terminus: MKYVFYLGVLAGTFFFADSSVQKEDPAPYLVYLKSHFNPCVGVLIKPSWVLAPAHCYLPNLKVMLGNFKSRVRDGTEQTINPIQIVRYWNYSHSAPQDDLMLIKLAKPAMLNPKVQPLTLATTNVRPGTVCLLSGLDWSQENSGRHPDLRQNLEAPVMSDRECQKTEQGKSHRNSLCVKFVKVFSRIFGEVAVATVICKDKLQGIEVGHFMGGDVGIYTNVYKYVSWIENTAKDK.

The N-terminal stretch at 1 to 19 (MKYVFYLGVLAGTFFFADS) is a signal peptide. Residues 20 to 233 (SVQKEDPAPY…YVSWIENTAK (214 aa)) form the Peptidase S1 domain. 3 disulfide bridges follow: cysteine 40/cysteine 56, cysteine 131/cysteine 198, and cysteine 163/cysteine 177.

It belongs to the peptidase S1 family. In terms of tissue distribution, testis-specific. Expressed in spermatids (at protein level).

The protein localises to the cytoplasmic vesicle. Its subcellular location is the secretory vesicle. The protein resides in the acrosome. It localises to the secreted. Plays a role in male fertility. May have a role in sperm migration or binding to zona-intact eggs. Involved in the activation of the proacrosin/acrosin system. The protein is Probable inactive serine protease 37 of Homo sapiens (Human).